Reading from the N-terminus, the 381-residue chain is Probable serine/threonine-protein kinase PBL25 (381 aa).

Cys-3 carries S-palmitoyl cysteine lipidation. The interval 16 to 41 (GSSMPAPYKQPNSPKRTTGEVVAKNA) is disordered. At Thr-54 the chain carries Phosphothreonine. The Protein kinase domain occupies 65-342 (FRQECLIGEG…SDVITALSFL (278 aa)). ATP-binding positions include 71 to 79 (IGEGGFGRV) and Lys-94. A Phosphotyrosine modification is found at Tyr-139. Catalysis depends on Asp-192, which acts as the Proton acceptor. A phosphoserine mark is found at Ser-196 and Ser-226. Thr-232 carries the post-translational modification Phosphothreonine. Tyr-240 bears the Phosphotyrosine mark. The disordered stretch occupies residues 347–381 (NSSNTGSNHLQQNRSNKYQDAVQWDSSPRYANSQM). Residues 355-381 (HLQQNRSNKYQDAVQWDSSPRYANSQM) show a composition bias toward polar residues.

Belongs to the protein kinase superfamily. Ser/Thr protein kinase family.

The protein resides in the cell membrane. The catalysed reaction is L-seryl-[protein] + ATP = O-phospho-L-seryl-[protein] + ADP + H(+). The enzyme catalyses L-threonyl-[protein] + ATP = O-phospho-L-threonyl-[protein] + ADP + H(+). In terms of biological role, may be involved in plant defense signaling. The polypeptide is Probable serine/threonine-protein kinase PBL25 (Arabidopsis thaliana (Mouse-ear cress)).